Consider the following 279-residue polypeptide: MDTELLKTFLEVSRTRHFGRAAESLYLTQSAVSFRIRQLENQLGVNLFTRHRNNIRLTAAGEKLLPYAEMLMSTWQAARKEVAHTSRHNEFSIGASASLWECMLNQWLGRLYQNQDAHTGLQFEARIAQRQSLVKQLHERQLDLLITTEAPKMDEFSSQLLGYFTLALYTSAPSKLKGDLNYLRLEWGPDFQQHEAGLIGADEVPILTTSSAELAQQQIAMLNGCTWLPVSWARKKGGLHTVVDSTTLSRPLYAIWLQNSDKNALIRDLLKINVLDEVY.

One can recognise an HTH lysR-type domain in the interval 1-58 (MDTELLKTFLEVSRTRHFGRAAESLYLTQSAVSFRIRQLENQLGVNLFTRHRNNIRLT). Residues 18–37 (FGRAAESLYLTQSAVSFRIR) constitute a DNA-binding region (H-T-H motif).

The protein belongs to the LysR transcriptional regulatory family.

Its function is as follows. Negatively regulates the transcription of the flagellar master operon flhDC by binding to the upstream region of the operon. The polypeptide is HTH-type transcriptional regulator HdfR (Shigella boydii serotype 18 (strain CDC 3083-94 / BS512)).